The primary structure comprises 61 residues: [Thr6, Val10, Asp11]-phyllokinin (61 aa).

The first 22 residues, 1–22 (MSFLKKSLFLVLFLGLVSFSIC), serve as a signal peptide directing secretion. A propeptide spanning residues 23–50 (EEEKRETEEEENEDEMNEESEEKRESPE) is cleaved from the precursor. Residues 24–61 (EEKRETEEEENEDEMNEESEEKRESPERPPGFTPFRVD) form a disordered region. Acidic residues predominate over residues 30–42 (EEEENEDEMNEES).

It belongs to the frog skin active peptide (FSAP) family. Bradykinin-related peptide subfamily. As to expression, expressed by the skin glands.

The protein localises to the secreted. Functionally, induces relaxation of rat smooth muscle from tail artery and contraction of that from ileum, urinary bladder and uterus. Binds to both bradykinin receptor B1 (BDKRB1) and B2 (BDKRB2). The chain is [Thr6, Val10, Asp11]-phyllokinin from Agalychnis spurrelli (Gliding leaf frog).